The following is a 554-amino-acid chain: ATP synthase subunit alpha (554 aa).

ATP is bound at residue 173–180 (GDRQTGKT). The interval 531 to 554 (SHLAAEKVRKHVPPSKPTTQRTAG) is disordered.

The protein belongs to the ATPase alpha/beta chains family. F-type ATPases have 2 components, CF(1) - the catalytic core - and CF(0) - the membrane proton channel. CF(1) has five subunits: alpha(3), beta(3), gamma(1), delta(1), epsilon(1). CF(0) has three main subunits: a(1), b(2) and c(9-12). The alpha and beta chains form an alternating ring which encloses part of the gamma chain. CF(1) is attached to CF(0) by a central stalk formed by the gamma and epsilon chains, while a peripheral stalk is formed by the delta and b chains.

It is found in the cell membrane. It carries out the reaction ATP + H2O + 4 H(+)(in) = ADP + phosphate + 5 H(+)(out). Its function is as follows. Produces ATP from ADP in the presence of a proton gradient across the membrane. The alpha chain is a regulatory subunit. In Acidothermus cellulolyticus (strain ATCC 43068 / DSM 8971 / 11B), this protein is ATP synthase subunit alpha.